The primary structure comprises 145 residues: MYPAHLLVLLAVCVSLLGASAIPPLPLNLVQFTYLIQCANKGSRPSYHYADYGCYCGAGGSGTPVDELDRCCKIHDDCYGEAEKMGCYPKLTMYNYYCGTEGPYCNTKTDCQRYVCACDLKAAKCFARSPYNNKNYNIDTSKRCK.

An N-terminal signal peptide occupies residues Met-1–Ala-21. A propeptide spanning residues Ile-22–Leu-27 is cleaved from the precursor. 7 disulfide bridges follow: Cys-38–Cys-98, Cys-54–Cys-144, Cys-56–Cys-72, Cys-71–Cys-125, Cys-78–Cys-118, Cys-87–Cys-111, and Cys-105–Cys-116. Residues Tyr-55, Gly-57, and Gly-59 each coordinate Ca(2+). Residue His-75 is part of the active site. Asp-76 contacts Ca(2+). Asp-119 is an active-site residue.

This sequence belongs to the phospholipase A2 family. Group I subfamily. D49 sub-subfamily. It depends on Ca(2+) as a cofactor. Expressed by the venom gland.

The protein resides in the secreted. It carries out the reaction a 1,2-diacyl-sn-glycero-3-phosphocholine + H2O = a 1-acyl-sn-glycero-3-phosphocholine + a fatty acid + H(+). Its function is as follows. PLA2 catalyzes the calcium-dependent hydrolysis of the 2-acyl groups in 3-sn-phosphoglycerides. In Laticauda semifasciata (Black-banded sea krait), this protein is Basic phospholipase A2 GL1-1.